Consider the following 386-residue polypeptide: MADYYEILEVARGATPEEIKKAYRKKAVQYHPDKNPGDADAEKRFKEISEAYEVLSDEKKRQVYDRYGKEALQGAAGGGQGFSSMDEALRTFMGAFGMGGGGESIFDFFGGGNGAEFGGREGGRGARQGASKRVNINVSFEEAVKGVDKELVISNYANCNVCNGKGSSSSQGIKTCSECKGRGQVFEQRGFFSMTMACPKCHGEGKVITDPCKNCKGQGAVKEKQHIKVHIPAGVDSGMRLKMSGYGDVGQHGGPAGDLYVFINVEPHEIFEREGNDILLDLPISFAEAALGCKKEVPSLTNRACRITIPEGTQNGKIFRVKGEGFPNVHGHGKGDLLVRIFVETPTRLSERQKELLQEFSELEGPNNLPKRKGFLDKIKEFFSPN.

One can recognise a J domain in the interval 3–68 (DYYEILEVAR…KKRQVYDRYG (66 aa)). A CR-type zinc finger spans residues 146 to 224 (GVDKELVISN…CKGQGAVKEK (79 aa)). Zn(2+)-binding residues include cysteine 159, cysteine 162, cysteine 176, cysteine 179, cysteine 198, cysteine 201, cysteine 212, and cysteine 215. CXXCXGXG motif repeat units lie at residues 159-166 (CNVCNGKG), 176-183 (CSECKGRG), 198-205 (CPKCHGEG), and 212-219 (CKNCKGQG).

This sequence belongs to the DnaJ family. As to quaternary structure, homodimer. Zn(2+) serves as cofactor.

It localises to the cytoplasm. In terms of biological role, participates actively in the response to hyperosmotic and heat shock by preventing the aggregation of stress-denatured proteins and by disaggregating proteins, also in an autonomous, DnaK-independent fashion. Unfolded proteins bind initially to DnaJ; upon interaction with the DnaJ-bound protein, DnaK hydrolyzes its bound ATP, resulting in the formation of a stable complex. GrpE releases ADP from DnaK; ATP binding to DnaK triggers the release of the substrate protein, thus completing the reaction cycle. Several rounds of ATP-dependent interactions between DnaJ, DnaK and GrpE are required for fully efficient folding. Also involved, together with DnaK and GrpE, in the DNA replication of plasmids through activation of initiation proteins. This is Chaperone protein DnaJ from Protochlamydia amoebophila (strain UWE25).